Here is a 204-residue protein sequence, read N- to C-terminus: Recombination protein RecR (204 aa).

The C4-type zinc finger occupies 63–78; that stretch reads CNRCFNITVEDPCTIC. Residues 86–181 enclose the Toprim domain; that stretch reads RQVCVVEEPL…RVTRLARGLP (96 aa).

The protein belongs to the RecR family.

In terms of biological role, may play a role in DNA repair. It seems to be involved in an RecBC-independent recombinational process of DNA repair. It may act with RecF and RecO. The chain is Recombination protein RecR from Herpetosiphon aurantiacus (strain ATCC 23779 / DSM 785 / 114-95).